The chain runs to 261 residues: 3-hydroxyacyl-CoA dehydrogenase type-2 (261 aa).

Ala2 is modified (N-acetylalanine). Positions 20 and 41 each coordinate NAD(+). Lys53 carries the N6-acetyllysine; alternate modification. Lys53 is subject to N6-succinyllysine; alternate. Val65 contributes to the NAD(+) binding site. At Lys69 the chain carries N6-acetyllysine. Cys91 is an NAD(+) binding site. N6-acetyllysine is present on residues Lys99 and Lys105. Residue Lys107 is modified to N6-acetyllysine; alternate. Residue Lys107 is modified to N6-succinyllysine; alternate. Ser155 lines the substrate pocket. Tyr168, Lys172, Phe201, and Thr203 together coordinate NAD(+). The active-site Proton acceptor is Tyr168. Lys212 is modified (N6-acetyllysine; alternate). Lys212 is modified (N6-succinyllysine; alternate).

The protein belongs to the short-chain dehydrogenases/reductases (SDR) family. As to quaternary structure, homotetramer. Component of mitochondrial ribonuclease P, a complex composed of TRMT10C/MRPP1, HSD17B10/MRPP2 and PRORP/MRPP3. Interacts with TRMT10C/MRPP1; forming the MRPP1-MRPP2 subcomplex of the mitochondrial ribonuclease P complex.

Its subcellular location is the mitochondrion. It is found in the mitochondrion matrix. The protein resides in the mitochondrion nucleoid. The catalysed reaction is a (3S)-3-hydroxyacyl-CoA + NAD(+) = a 3-oxoacyl-CoA + NADH + H(+). The enzyme catalyses (2S,3S)-3-hydroxy-2-methylbutanoyl-CoA + NAD(+) = 2-methyl-3-oxobutanoyl-CoA + NADH + H(+). It carries out the reaction testosterone + NAD(+) = androst-4-ene-3,17-dione + NADH + H(+). It catalyses the reaction 5alpha-androstane-3alpha,17beta-diol + NAD(+) = 17beta-hydroxy-5alpha-androstan-3-one + NADH + H(+). The catalysed reaction is 17beta-estradiol + NAD(+) = estrone + NADH + H(+). The enzyme catalyses cholate + NAD(+) = 3alpha,12alpha-dihydroxy-7-oxo-5beta-cholanate + NADH + H(+). It carries out the reaction (3S)-3-hydroxybutanoyl-CoA + NAD(+) = acetoacetyl-CoA + NADH + H(+). It catalyses the reaction (3S)-hydroxyoctanoyl-CoA + NAD(+) = 3-oxooctanoyl-CoA + NADH + H(+). The catalysed reaction is (3S)-hydroxyhexadecanoyl-CoA + NAD(+) = 3-oxohexadecanoyl-CoA + NADH + H(+). The enzyme catalyses 17beta-hydroxy-5alpha-androstan-3-one + NAD(+) = 5alpha-androstan-3,17-dione + NADH + H(+). It carries out the reaction 5alpha-pregnan-20beta-ol-3-one + NAD(+) = 5alpha-pregnane-3,20-dione + NADH + H(+). It catalyses the reaction 3alpha-hydroxy-5alpha-pregnan-20-one + NAD(+) = 5alpha-pregnane-3,20-dione + NADH + H(+). The catalysed reaction is cortisone + NAD(+) = 17alpha-hydroxypregn-4-en-3,11,20-trione-21-al + NADH + H(+). The enzyme catalyses 11-dehydrocorticosterone + NAD(+) = pregn-4-ene-3,11,20,21-tetraone + NADH + H(+). It carries out the reaction cortisol + NAD(+) = 11beta,17alpha-dihydroxypregn-4-ene-3,20,21-trione + NADH + H(+). It catalyses the reaction chenodeoxycholate + NAD(+) = 7-oxolithocholate + NADH + H(+). The catalysed reaction is ursodeoxycholate + NAD(+) = 7-oxolithocholate + NADH + H(+). The enzyme catalyses 3beta,7beta-dihydroxy-5beta-cholan-24-oate + NAD(+) = 3beta-hydroxy-7-oxo-5beta-cholan-24-oate + NADH + H(+). It functions in the pathway amino-acid degradation; L-isoleucine degradation. The protein operates within lipid metabolism; fatty acid beta-oxidation. Its pathway is steroid metabolism. It participates in lipid metabolism; bile acid biosynthesis. In terms of biological role, mitochondrial dehydrogenase involved in pathways of fatty acid, branched-chain amino acid and steroid metabolism. Acts as (S)-3-hydroxyacyl-CoA dehydrogenase in mitochondrial fatty acid beta-oxidation, a major degradation pathway of fatty acids. Catalyzes the third step in the beta-oxidation cycle, namely the reversible conversion of (S)-3-hydroxyacyl-CoA to 3-ketoacyl-CoA. Preferentially accepts straight medium- and short-chain acyl-CoA substrates with highest efficiency for (3S)-hydroxybutanoyl-CoA. Acts as 3-hydroxy-2-methylbutyryl-CoA dehydrogenase in branched-chain amino acid catabolic pathway. Catalyzes the oxidation of 3-hydroxy-2-methylbutanoyl-CoA into 2-methyl-3-oxobutanoyl-CoA, a step in isoleucine degradation pathway. Has hydroxysteroid dehydrogenase activity toward steroid hormones and bile acids. Catalyzes the oxidation of 3alpha-, 17beta-, 20beta- and 21-hydroxysteroids and 7alpha- and 7beta-hydroxy bile acids. Oxidizes allopregnanolone/brexanolone at the 3alpha-hydroxyl group, which is known to be critical for the activation of gamma-aminobutyric acid receptors (GABAARs) chloride channel. Has phospholipase C-like activity toward cardiolipin and its oxidized species. Likely oxidizes the 2'-hydroxyl in the head group of cardiolipin to form a ketone intermediate that undergoes nucleophilic attack by water and fragments into diacylglycerol, dihydroxyacetone and orthophosphate. Has higher affinity for cardiolipin with oxidized fatty acids and may degrade these species during the oxidative stress response to protect cells from apoptosis. By interacting with intracellular amyloid-beta, it may contribute to the neuronal dysfunction associated with Alzheimer disease (AD). Essential for structural and functional integrity of mitochondria. In addition to mitochondrial dehydrogenase activity, moonlights as a component of mitochondrial ribonuclease P, a complex that cleaves tRNA molecules in their 5'-ends. Together with TRMT10C/MRPP1, forms a subcomplex of the mitochondrial ribonuclease P, named MRPP1-MRPP2 subcomplex, which displays functions that are independent of the ribonuclease P activity. The MRPP1-MRPP2 subcomplex catalyzes the formation of N(1)-methylguanine and N(1)-methyladenine at position 9 (m1G9 and m1A9, respectively) in tRNAs; HSD17B10/MRPP2 acting as a non-catalytic subunit. The MRPP1-MRPP2 subcomplex also acts as a tRNA maturation platform: following 5'-end cleavage by the mitochondrial ribonuclease P complex, the MRPP1-MRPP2 subcomplex enhances the efficiency of 3'-processing catalyzed by ELAC2, retains the tRNA product after ELAC2 processing and presents the nascent tRNA to the mitochondrial CCA tRNA nucleotidyltransferase TRNT1 enzyme. Associates with mitochondrial DNA complexes at the nucleoids to initiate RNA processing and ribosome assembly. In Mus musculus (Mouse), this protein is 3-hydroxyacyl-CoA dehydrogenase type-2 (Hsd17b10).